We begin with the raw amino-acid sequence, 350 residues long: Protein RecA (350 aa).

Residue 65 to 72 participates in ATP binding; it reads GPESSGKT.

This sequence belongs to the RecA family.

It localises to the cytoplasm. Functionally, can catalyze the hydrolysis of ATP in the presence of single-stranded DNA, the ATP-dependent uptake of single-stranded DNA by duplex DNA, and the ATP-dependent hybridization of homologous single-stranded DNAs. It interacts with LexA causing its activation and leading to its autocatalytic cleavage. The sequence is that of Protein RecA from Clostridium tetani (strain Massachusetts / E88).